We begin with the raw amino-acid sequence, 384 residues long: MPVNEEDLKTYRRDLHKIPELALAEFKTHRYLLEKIQSWQTNFMTIRQVEELPTAMLVKFSGTDPSRTVGYRADIDALPVTEDTGLPFESTHKGVMHACGHDVHMSLALGLVQYFSEHQPKDNLIVFFQPAEESKSGGKLAVDLGIFEGEWHPDEFYGIHDQPNLPAGTLSTLAGTLFAGTAELEIDIHGQGGHAAYPHLGKDPIVISAELIMLLQTVVSRDVDPIEGGVVSLGMISGGFTNNVIPDTVHLAGTVRSMTKDGLDKMTTRIRQIVEGVALANDVKINVRLETGSYLPVENNPDLANNLLSFMEQRQDIAFEEAKPAMTGEDFGYILQHIPGVMLWLGVNDNHSLHSAKLNIDEAALLPGFNALKDFIEWRMSQGE.

Residue aspartate 74 is part of the active site. Residue glutamate 133 is the Proton acceptor of the active site.

Belongs to the peptidase M20A family. N-acetyldiaminopimelate deacetylase subfamily.

The catalysed reaction is N-acetyl-(2S,6S)-2,6-diaminopimelate + H2O = (2S,6S)-2,6-diaminopimelate + acetate. It participates in amino-acid biosynthesis; L-lysine biosynthesis via DAP pathway; LL-2,6-diaminopimelate from (S)-tetrahydrodipicolinate (acetylase route): step 3/3. Its function is as follows. Catalyzes the conversion of N-acetyl-diaminopimelate to diaminopimelate and acetate. This Leuconostoc mesenteroides subsp. mesenteroides (strain ATCC 8293 / DSM 20343 / BCRC 11652 / CCM 1803 / JCM 6124 / NCDO 523 / NBRC 100496 / NCIMB 8023 / NCTC 12954 / NRRL B-1118 / 37Y) protein is N-acetyldiaminopimelate deacetylase.